The primary structure comprises 428 residues: MSKTHLTEQKFSDFALHPLVLEALEKKGFQHCTPIQALALPLTLSGRDVAGQAQTGTGKTLAFLTSTFHYLLSHPAKQDRKINQPRALIMAPTRELAVQIHSDAEALSQSTGLKMGLAYGGDGYDKQLKVLESGVDILVGTTGRLIDYAKQNYIDLGAIQVVVLDEADRMYDLGFIKDIRWLFRRMPAVDQRLNMLFSATLSYRVRELAFEQMNNAEYVEVEPEQKTGHRIKEELFYPSNEEKMRLLQTLIEEEWPDRCIIFANTKHRCEDVWGHLAADGHRVGLLTGDVAQKKRLRILDDFTKGNLDILVATDVAARGLHIPLVTHVFNYDLPDDCEDYVHRIGRTGRAGESGHSISLACEEYALNLPAIETYTGHSIPVSKYNSDALLSDLPAPKRLARPRGGNGPRRNSAPRRGGAPRNNRKRSG.

The short motif at 9–37 (QKFSDFALHPLVLEALEKKGFQHCTPIQA) is the Q motif element. In terms of domain architecture, Helicase ATP-binding spans 40 to 219 (LPLTLSGRDV…FEQMNNAEYV (180 aa)). 53 to 60 (AQTGTGKT) is an ATP binding site. Positions 165 to 168 (DEAD) match the DEAD box motif. In terms of domain architecture, Helicase C-terminal spans 245–390 (RLLQTLIEEE…VSKYNSDALL (146 aa)). The segment at 392 to 428 (DLPAPKRLARPRGGNGPRRNSAPRRGGAPRNNRKRSG) is disordered. Positions 408-421 (PRRNSAPRRGGAPR) are enriched in low complexity.

It belongs to the DEAD box helicase family. RhlB subfamily. As to quaternary structure, component of the RNA degradosome, which is a multiprotein complex involved in RNA processing and mRNA degradation.

It is found in the cytoplasm. The catalysed reaction is ATP + H2O = ADP + phosphate + H(+). DEAD-box RNA helicase involved in RNA degradation. Has RNA-dependent ATPase activity and unwinds double-stranded RNA. This chain is ATP-dependent RNA helicase RhlB, found in Serratia proteamaculans (strain 568).